A 368-amino-acid chain; its full sequence is 3-dehydroquinate synthase (368 aa).

Residues 112–116, 136–137, lysine 149, lysine 158, and 176–179 each bind NAD(+); these read GVVGD, TT, and FLDT. Glutamate 191, histidine 257, and histidine 274 together coordinate Zn(2+).

This sequence belongs to the sugar phosphate cyclases superfamily. Dehydroquinate synthase family. It depends on Co(2+) as a cofactor. Zn(2+) serves as cofactor. The cofactor is NAD(+).

It localises to the cytoplasm. It catalyses the reaction 7-phospho-2-dehydro-3-deoxy-D-arabino-heptonate = 3-dehydroquinate + phosphate. It participates in metabolic intermediate biosynthesis; chorismate biosynthesis; chorismate from D-erythrose 4-phosphate and phosphoenolpyruvate: step 2/7. In terms of biological role, catalyzes the conversion of 3-deoxy-D-arabino-heptulosonate 7-phosphate (DAHP) to dehydroquinate (DHQ). The polypeptide is 3-dehydroquinate synthase (Natranaerobius thermophilus (strain ATCC BAA-1301 / DSM 18059 / JW/NM-WN-LF)).